The primary structure comprises 990 residues: Bifunctional glutamine synthetase adenylyltransferase/adenylyl-removing enzyme (990 aa).

Residues 1–474 (MPTDNENSMT…HFNELVEESQ (474 aa)) are adenylyl removase. The interval 484–990 (FIACQDAWRL…WDTLFGTCSE (507 aa)) is adenylyl transferase.

It belongs to the GlnE family. The cofactor is Mg(2+).

It carries out the reaction [glutamine synthetase]-O(4)-(5'-adenylyl)-L-tyrosine + phosphate = [glutamine synthetase]-L-tyrosine + ADP. The enzyme catalyses [glutamine synthetase]-L-tyrosine + ATP = [glutamine synthetase]-O(4)-(5'-adenylyl)-L-tyrosine + diphosphate. Functionally, involved in the regulation of glutamine synthetase GlnA, a key enzyme in the process to assimilate ammonia. When cellular nitrogen levels are high, the C-terminal adenylyl transferase (AT) inactivates GlnA by covalent transfer of an adenylyl group from ATP to specific tyrosine residue of GlnA, thus reducing its activity. Conversely, when nitrogen levels are low, the N-terminal adenylyl removase (AR) activates GlnA by removing the adenylyl group by phosphorolysis, increasing its activity. The regulatory region of GlnE binds the signal transduction protein PII (GlnB) which indicates the nitrogen status of the cell. The sequence is that of Bifunctional glutamine synthetase adenylyltransferase/adenylyl-removing enzyme from Alteromonas mediterranea (strain DSM 17117 / CIP 110805 / LMG 28347 / Deep ecotype).